Reading from the N-terminus, the 156-residue chain is Transcription elongation factor GreA (156 aa).

This sequence belongs to the GreA/GreB family.

In terms of biological role, necessary for efficient RNA polymerase transcription elongation past template-encoded arresting sites. The arresting sites in DNA have the property of trapping a certain fraction of elongating RNA polymerases that pass through, resulting in locked ternary complexes. Cleavage of the nascent transcript by cleavage factors such as GreA or GreB allows the resumption of elongation from the new 3'terminus. GreA releases sequences of 2 to 3 nucleotides. This chain is Transcription elongation factor GreA, found in Thermomicrobium roseum (strain ATCC 27502 / DSM 5159 / P-2).